The chain runs to 121 residues: Cell division protein FtsL (121 aa).

The Cytoplasmic segment spans residues Met-1–Arg-34. A helical membrane pass occupies residues Phe-35 to Ala-57. Residues His-58–Lys-121 are Periplasmic-facing.

This sequence belongs to the FtsL family. In terms of assembly, part of a complex composed of FtsB, FtsL and FtsQ.

The protein localises to the cell inner membrane. Essential cell division protein. May link together the upstream cell division proteins, which are predominantly cytoplasmic, with the downstream cell division proteins, which are predominantly periplasmic. This Salmonella typhimurium (strain LT2 / SGSC1412 / ATCC 700720) protein is Cell division protein FtsL.